The following is a 125-amino-acid chain: Small ribosomal subunit protein bS6 (125 aa).

Residues 96–125 form a disordered region; it reads VTAPSPMMREEKAKSAPQPAEEAKETTLAT. Residues 116–125 show a composition bias toward basic and acidic residues; that stretch reads EEAKETTLAT.

Belongs to the bacterial ribosomal protein bS6 family.

Its function is as follows. Binds together with bS18 to 16S ribosomal RNA. This chain is Small ribosomal subunit protein bS6, found in Nitrosospira multiformis (strain ATCC 25196 / NCIMB 11849 / C 71).